Here is a 383-residue protein sequence, read N- to C-terminus: Chitinase-3-like protein 1 (383 aa).

The first 21 residues, 1–21, serve as a signal peptide directing secretion; that stretch reads MGVKASQTGFVVLVLLQCCSA. One can recognise a GH18 domain in the interval 22–383; the sequence is YKLVCYYTSW…NAIKDALAAT (362 aa). Cys26 and Cys51 are joined by a disulfide. Asn60 is a glycosylation site (N-linked (GlcNAc...) asparagine). Chitin is bound by residues 70 to 71, 97 to 100, Tyr141, 204 to 207, and Arg263; these read EW, GGWN, and MTYD. Cysteines 300 and 364 form a disulfide. Residues 324–338 form an important for AKT1 activation and IL8 production region; sequence QWVGYDDQESVKSKV. Trp352 is a binding site for chitin.

Belongs to the glycosyl hydrolase 18 family. As to quaternary structure, monomer. In terms of processing, glycosylated. Present in activated macrophages, articular chondrocytes, synovial cells as well as in liver. Very low or undetectable expression in non-inflammatory colon. Undetectable in muscle tissues, lung, pancreas, mononuclear cells, or fibroblasts.

Its subcellular location is the secreted. The protein localises to the extracellular space. It is found in the cytoplasm. It localises to the perinuclear region. The protein resides in the endoplasmic reticulum. Carbohydrate-binding lectin with a preference for chitin. Has no chitinase activity. May play a role in tissue remodeling and in the capacity of cells to respond to and cope with changes in their environment. Plays a role in T-helper cell type 2 (Th2) inflammatory response and IL-13-induced inflammation, regulating allergen sensitization, inflammatory cell apoptosis, dendritic cell accumulation and M2 macrophage differentiation. Facilitates invasion of pathogenic enteric bacteria into colonic mucosa and lymphoid organs. Mediates activation of AKT1 signaling pathway and subsequent IL8 production in colonic epithelial cells. Regulates antibacterial responses in lung by contributing to macrophage bacterial killing, controlling bacterial dissemination and augmenting host tolerance. Also regulates hyperoxia-induced injury, inflammation and epithelial apoptosis in lung. The sequence is that of Chitinase-3-like protein 1 (CHI3L1) from Homo sapiens (Human).